The chain runs to 160 residues: Ribosomal RNA large subunit methyltransferase H (160 aa).

Residues leucine 76, glycine 108, and 127 to 132 (LGKMTW) contribute to the S-adenosyl-L-methionine site.

Belongs to the RNA methyltransferase RlmH family. Homodimer.

It is found in the cytoplasm. It catalyses the reaction pseudouridine(1915) in 23S rRNA + S-adenosyl-L-methionine = N(3)-methylpseudouridine(1915) in 23S rRNA + S-adenosyl-L-homocysteine + H(+). In terms of biological role, specifically methylates the pseudouridine at position 1915 (m3Psi1915) in 23S rRNA. The polypeptide is Ribosomal RNA large subunit methyltransferase H (Rhizobium meliloti (strain 1021) (Ensifer meliloti)).